Consider the following 141-residue polypeptide: Cystatin (141 aa).

An N-terminal signal peptide occupies residues 1–26 (MVHSQLPVAGPLRLLCALLLLPSATM). In terms of domain architecture, Cystatin spans 29–129 (GGLSPRSVTD…CRFQVWSRPW (101 aa)). A Secondary area of contact motif is present at residues 73–77 (QVVSG). Cystine bridges form between C91–C107 and C120–C140.

The protein belongs to the cystatin family. In terms of tissue distribution, expressed at a low level by the venom gland (at protein level).

Its subcellular location is the secreted. Its function is as follows. Inhibits various C1 cysteine proteases including cathepsin L, papain and cathepsin B. This protein has no toxic activity and its function in the venom is unknown. It may play a role as a housekeeping or regulatory protein. In Pseudechis porphyriacus (Red-bellied black snake), this protein is Cystatin.